The sequence spans 155 residues: Short-chain-enoyl-CoA hydratase (155 aa).

The protein belongs to the enoyl-CoA hydratase/isomerase family.

It catalyses the reaction a short-chain (3S)-3-hydroxyacyl-CoA = a short-chain (2E)-enoyl-CoA + H2O. It participates in lipid metabolism; butanoate metabolism. This is Short-chain-enoyl-CoA hydratase (crt) from Clostridioides difficile (Peptoclostridium difficile).